Here is a 441-residue protein sequence, read N- to C-terminus: Putative F-box/FBD/LRR-repeat protein At4g00315 (441 aa).

The 47-residue stretch at 1–47 folds into the F-box domain; sequence MDKTSQLPDELLVKVLSFLPTKDAVRTSLLSMRWKSLWMWLPKLEYD. 8 LRR repeats span residues 57-82, 87-115, 137-164, 165-190, 211-236, 243-271, 293-318, and 319-344; these read QGLA…SLKL, IGSI…SLKL, ILKL…FLGR, VTYS…VVER, LKMS…KVTD, SDNE…DFVL, LGVY…KICS, and CDSD…EAYV. Residues 358 to 410 enclose the FBD domain; that stretch reads QWGNQLNCVPKCLLSSLETFKWSEMYGLLQNQMDVAKYILRNARCLKSATIFF.

In Arabidopsis thaliana (Mouse-ear cress), this protein is Putative F-box/FBD/LRR-repeat protein At4g00315.